A 493-amino-acid polypeptide reads, in one-letter code: Occludin (493 aa).

Residues 1 to 47 lie on the Cytoplasmic side of the membrane; the sequence is MYSRPSNYAPSKDVYGGEMRSQPAYSYYPEEEIQHFYRWSSPPGIIK. Residues 41–250 enclose the MARVEL domain; sequence SPPGIIKIMS…IIFFAVKTRK (210 aa). A helical transmembrane segment spans residues 48–70; sequence IMSILIVVMCVGIFACVASTLPW. The Extracellular segment spans residues 71-116; it reads DLDITGQSMGYGMGSGSYSGGYTGYGFGGSQMGLGFAYGGNYTDPR. Residues 117–141 form a helical membrane-spanning segment; that stretch reads AAKGFILAMAAFCFIIGLVIFVMLV. Topologically, residues 142-151 are cytoplasmic; sequence TRTPLSTSRK. The helical transmembrane segment at 152–176 threads the bilayer; that stretch reads FYLIVIIVSAIIGGLVFIATIVYTV. Topologically, residues 177-224 are extracellular; that stretch reads GVNPVAQASGSAFYTQIVSICNQFYSPVQTGVFVNQYLYHYCVVEPQE. Cysteine 197 and cysteine 218 are oxidised to a cystine. Residues 225-246 traverse the membrane as a helical segment; that stretch reads AIAIVLGFLIVVAFAIIIFFAV. Residues 247–493 lie on the Cytoplasmic side of the membrane; that stretch reads KTRKKINQYG…IKQMVSNYDK (247 aa). The tract at residues 334–407 is disordered; it reads YGMSPRHYSS…TKQRQEYKQE (74 aa). Residues 352 to 361 show a composition bias toward basic residues; the sequence is APPKKRPGKP. Threonine 375 carries the post-translational modification Phosphothreonine; by CK2; in vitro. A Phosphoserine; by CK2; in vitro modification is found at serine 379. Residues 379-389 are compositionally biased toward acidic residues; it reads SADELEDDSWD. One can recognise an OCEL domain in the interval 386–493; the sequence is DSWDSEYPPI…IKQMVSNYDK (108 aa). Positions 396-428 form a coiled coil; it reads TQTKQRQEYKQEFASDLHEYKRLQAELDELSKI.

Belongs to the ELL/occludin family. Interacts in vitro with cingulin, possibly directly. Interacts with ZO-1. Phosphorylated. In terms of tissue distribution, localized at tight junctions of both epithelial and endothelial cells.

The protein localises to the cell membrane. It localises to the cell junction. Its subcellular location is the tight junction. Its function is as follows. Probably plays a role in the formation and regulation of the tight junction (TJ) paracellular permeability barrier. The sequence is that of Occludin (ocln) from Xenopus laevis (African clawed frog).